The primary structure comprises 277 residues: Outer kinetochore KNL1 complex subunit ZWINT (277 aa).

Positions 80–155 (ASEDTSRQKA…MEKRRAVQNQ (76 aa)) are interaction with NDC80 and ZW10. A coiled-coil region spans residues 104 to 217 (REHVEAIKIG…RYQTFLQLLY (114 aa)). Residues 228-277 (AEAEAENLPDDKPQQPTRPQEQSTGDTMGRDPGVSFKAVGLQPAGDVNLP) form a disordered region. Residues 241–253 (QQPTRPQEQSTGD) are compositionally biased toward polar residues.

Component of the KNL1 complex composed of KNL1 and ZWINT. Part of the ten-subunit outer kinetochore KMN network that includes the KNL1, MIS12 and NDC80 complexes; a bioriented kinetochore contains approximately 150 copies of the network. Interacts with the MIS12 complex subunits MIS12 DSN1, and PMF1. Interacts with the NDC80 complex subunit NDC80 during mitosis. Interacts with ZW10. Interacts with CETN3.

Its subcellular location is the nucleus. The protein localises to the chromosome. It is found in the centromere. It localises to the kinetochore. Acts as a component of the outer kinetochore KNL1 complex that serves as a docking point for spindle assembly checkpoint components and mediates microtubule-kinetochore interactions. Kinetochores, consisting of a centromere-associated inner segment and a microtubule-contacting outer segment, play a crucial role in chromosome segregation by mediating the physical connection between centromeric DNA and spindle microtubules. The outer kinetochore is made up of the ten-subunit KMN network, comprising the MIS12, NDC80 and KNL1 complexes, and auxiliary microtubule-associated components; together they connect the outer kinetochore with the inner kinetochore, bind microtubules, and mediate interactions with mitotic checkpoint proteins that delay anaphase until chromosomes are bioriented on the spindle. Targets the RZZ complex to the kinetochore at prometaphase. Recruits MAD2L1 to the kinetochore, but is not required for BUB1B localization. In addition to orienting mitotic chromosomes, it is also essential for alignment of homologous chromosomes during meiotic metaphase I. In meiosis I, required to activate the spindle assembly checkpoint at unattached kinetochores to correct erroneous kinetochore-microtubule attachments. This chain is Outer kinetochore KNL1 complex subunit ZWINT (ZWINT), found in Homo sapiens (Human).